A 372-amino-acid polypeptide reads, in one-letter code: N-methyl-L-tryptophan oxidase (372 aa).

4–34 (DLIIIGSGSVGAAAGYYATRAGLNVLMTDAH) contributes to the FAD binding site. C308 is subject to S-8alpha-FAD cysteine.

Belongs to the MSOX/MTOX family. MTOX subfamily. In terms of assembly, monomer. FAD is required as a cofactor.

The enzyme catalyses N(alpha)-methyl-L-tryptophan + O2 + H2O = L-tryptophan + formaldehyde + H2O2. Catalyzes the oxidative demethylation of N-methyl-L-tryptophan. This is N-methyl-L-tryptophan oxidase from Escherichia coli (strain SMS-3-5 / SECEC).